We begin with the raw amino-acid sequence, 491 residues long: Cytochrome P450 2F1 (491 aa).

Heme is bound at residue Cys436.

It belongs to the cytochrome P450 family. Heme is required as a cofactor. Expressed in lung. Rarely detected in liver and placenta.

The protein resides in the endoplasmic reticulum membrane. The protein localises to the microsome membrane. The catalysed reaction is an organic molecule + reduced [NADPH--hemoprotein reductase] + O2 = an alcohol + oxidized [NADPH--hemoprotein reductase] + H2O + H(+). Its function is as follows. May be involved in the metabolism of various pneumotoxicants including naphthalene. Is able to dealkylate ethoxycoumarin, propoxycoumarin, and pentoxyresorufin but possesses no activity toward ethoxyresorufin and only trace dearylation activity toward benzyloxyresorufin. Bioactivates 3-methylindole (3MI) by dehydrogenation to the putative electrophile 3-methylene-indolenine. The protein is Cytochrome P450 2F1 (CYP2F1) of Homo sapiens (Human).